A 3601-amino-acid chain; its full sequence is Protein SPIRRIG (3601 aa).

Disordered regions lie at residues 17–50 (AQSS…PSSS), 398–426 (SSNH…ADFS), 449–476 (PAEP…TSSV), 638–657 (QYSG…SFRK), 1954–1993 (HIND…SLGS), 2009–2049 (ENIL…DFQD), and 2715–2747 (TTHV…EKEL). Residues 32-50 (PPSSSSSSSSPSFTYPSSS) show a composition bias toward low complexity. Composition is skewed to polar residues over residues 416–426 (NTNSTENADFS) and 458–476 (SRSS…TSSV). A compositionally biased stretch (polar residues) spans 1974 to 1991 (STKTSISVGSFPQGQVSL). Residues 2027–2048 (EDVKKQDDHHVGPSASSERDFQ) show a composition bias toward basic and acidic residues. A compositionally biased stretch (polar residues) spans 2715–2731 (TTHVKSETGSPRHSSSA). Residues 2732-2747 (KMDETNGREEKSEKEL) are compositionally biased toward basic and acidic residues. In terms of domain architecture, BEACH-type PH spans 2760–2927 (EHLEKIRFRY…EREEVFKNLV (168 aa)). Residues 2952–3244 (GGRLFKLMAK…QLFPKAHVKR (293 aa)) form the BEACH domain. 4 WD repeats span residues 3328–3367 (HESN…PRGS), 3378–3417 (AHTA…FVRQ), 3464–3507 (PSDS…DPVS), and 3540–3579 (FHKQ…LRAS).

In terms of assembly, interacts with DCP1. Expressed in flowers, leaves, stems, hypocotyls and roots.

Its subcellular location is the cytoplasm. It is found in the P-body. In terms of biological role, involved in cell morphogenesis. May have a function in membrane fusion or membrane composition. Required for salt stress tolerance. Regulates the salt stress-dependent post-transcriptional stabilization, cytoplasmic agglomeration, and localization to P-bodies of a subset of salt stress-regulated mRNAs. The protein is Protein SPIRRIG of Arabidopsis thaliana (Mouse-ear cress).